The chain runs to 375 residues: Queuine tRNA-ribosyltransferase (375 aa).

Asp90 functions as the Proton acceptor in the catalytic mechanism. Substrate contacts are provided by residues 90 to 94 (DSGGF), Asp144, Gln190, and Gly217. An RNA binding region spans residues 248-254 (GIGTPHY). Asp267 serves as the catalytic Nucleophile. Positions 272 to 276 (TRIAR) are RNA binding; important for wobble base 34 recognition. Positions 305, 307, 310, and 336 each coordinate Zn(2+).

It belongs to the queuine tRNA-ribosyltransferase family. In terms of assembly, homodimer. Within each dimer, one monomer is responsible for RNA recognition and catalysis, while the other monomer binds to the replacement base PreQ1. The cofactor is Zn(2+).

The catalysed reaction is 7-aminomethyl-7-carbaguanine + guanosine(34) in tRNA = 7-aminomethyl-7-carbaguanosine(34) in tRNA + guanine. The protein operates within tRNA modification; tRNA-queuosine biosynthesis. Catalyzes the base-exchange of a guanine (G) residue with the queuine precursor 7-aminomethyl-7-deazaguanine (PreQ1) at position 34 (anticodon wobble position) in tRNAs with GU(N) anticodons (tRNA-Asp, -Asn, -His and -Tyr). Catalysis occurs through a double-displacement mechanism. The nucleophile active site attacks the C1' of nucleotide 34 to detach the guanine base from the RNA, forming a covalent enzyme-RNA intermediate. The proton acceptor active site deprotonates the incoming PreQ1, allowing a nucleophilic attack on the C1' of the ribose to form the product. After dissociation, two additional enzymatic reactions on the tRNA convert PreQ1 to queuine (Q), resulting in the hypermodified nucleoside queuosine (7-(((4,5-cis-dihydroxy-2-cyclopenten-1-yl)amino)methyl)-7-deazaguanosine). This Borrelia hermsii (strain HS1 / DAH) protein is Queuine tRNA-ribosyltransferase.